The chain runs to 101 residues: Small ribosomal subunit protein uS14 (101 aa).

Basic and acidic residues predominate over residues 1–11 (MAKKSAIETNE). The tract at residues 1–24 (MAKKSAIETNERRRKLSQSKAAKR) is disordered. Residues 12–24 (RRRKLSQSKAAKR) are compositionally biased toward basic residues.

The protein belongs to the universal ribosomal protein uS14 family. In terms of assembly, part of the 30S ribosomal subunit. Contacts proteins S3 and S10.

Functionally, binds 16S rRNA, required for the assembly of 30S particles and may also be responsible for determining the conformation of the 16S rRNA at the A site. The protein is Small ribosomal subunit protein uS14 of Azorhizobium caulinodans (strain ATCC 43989 / DSM 5975 / JCM 20966 / LMG 6465 / NBRC 14845 / NCIMB 13405 / ORS 571).